A 107-amino-acid chain; its full sequence is Thioredoxin (107 aa).

Residues 2-107 (PSPIQVTDFS…TLTNALKKYL (106 aa)) enclose the Thioredoxin domain. Active-site nucleophile residues include Cys32 and Cys35. A disulfide bridge connects residues Cys32 and Cys35.

This sequence belongs to the thioredoxin family.

It is found in the plastid. The protein localises to the chloroplast. Its function is as follows. Participates in various redox reactions through the reversible oxidation of its active center dithiol to a disulfide and catalyzes dithiol-disulfide exchange reactions. The protein is Thioredoxin (trxA) of Cyanidium caldarium (Red alga).